Here is a 494-residue protein sequence, read N- to C-terminus: BUB3-interacting and GLEBS motif-containing protein ZNF207 (494 aa).

The microtubule-binding region stretch occupies residues 1–92 (MGRKKKKQLK…EGIPEKDMDE (92 aa)). 2 consecutive C2H2-type zinc fingers follow at residues 11–34 (PWCW…KAKH) and 35–58 (FKCH…MQVH). Residues 100–111 (KTQESQKKKQQD) show a composition bias toward basic and acidic residues. Disordered stretches follow at residues 100 to 161 (KTQE…PGIP), 250 to 377 (NRPP…SATS), and 455 to 494 (LPGA…GGRY). The span at 112–121 (DSDEYDDDDS) shows a compositional bias: acidic residues. Positions 127-136 (FQPQPVQPQQ) are enriched in polar residues. Over residues 142 to 161 (MAQPGLPPVPGAPGMPPGIP) the composition is skewed to pro residues. A compositionally biased stretch (low complexity) spans 283–300 (SSSTASSNSESLSASSKA). Polar residues predominate over residues 323–332 (LNSTPATSTE). Residues 342 to 377 (TQSTASTTSTTNSTAAKPAASITSKPATLTTTSATS) are compositionally biased toward low complexity. A GLEBS region spans residues 375 to 407 (ATSKLIHPDEDISLEERRAQLPKYQRNLPRPGQ). Over residues 463 to 483 (GQGPPMVPPYQGGPPRPPMGM) the composition is skewed to pro residues.

Interacts (via GLEBS region) with BUB3.

Its subcellular location is the nucleus. It localises to the chromosome. It is found in the centromere. The protein resides in the kinetochore. The protein localises to the cytoplasm. Its subcellular location is the cytoskeleton. It localises to the spindle. Its function is as follows. Kinetochore- and microtubule-binding protein that plays a key role in spindle assembly. ZNF207/BuGZ is mainly composed of disordered low-complexity regions and undergoes phase transition or coacervation to form temperature-dependent liquid droplets. Coacervation promotes microtubule bundling and concentrates tubulin, promoting microtubule polymerization and assembly of spindle and spindle matrix by concentrating its building blocks. Also acts as a regulator of mitotic chromosome alignment by mediating the stability and kinetochore loading of BUB3. Mechanisms by which BUB3 is protected are unclear: according to a first report, ZNF207/BuGZ may act by blocking ubiquitination and proteasomal degradation of BUB3. According to another report, the stabilization is independent of the proteasome. The chain is BUB3-interacting and GLEBS motif-containing protein ZNF207 from Pongo abelii (Sumatran orangutan).